We begin with the raw amino-acid sequence, 444 residues long: UDP-N-acetylmuramoylalanine--D-glutamate ligase (444 aa).

113 to 119 is an ATP binding site; that stretch reads GSNGKST.

This sequence belongs to the MurCDEF family.

It is found in the cytoplasm. It carries out the reaction UDP-N-acetyl-alpha-D-muramoyl-L-alanine + D-glutamate + ATP = UDP-N-acetyl-alpha-D-muramoyl-L-alanyl-D-glutamate + ADP + phosphate + H(+). The protein operates within cell wall biogenesis; peptidoglycan biosynthesis. In terms of biological role, cell wall formation. Catalyzes the addition of glutamate to the nucleotide precursor UDP-N-acetylmuramoyl-L-alanine (UMA). The sequence is that of UDP-N-acetylmuramoylalanine--D-glutamate ligase from Blochmanniella floridana.